Reading from the N-terminus, the 270-residue chain is Protein-ADP-ribose hydrolase (270 aa).

One can recognise a Macro domain in the interval 73-267; it reads VSVKDCQKTN…LYDTYLQKEN (195 aa). ADP-D-ribose-binding residues include aspartate 92, isoleucine 93, and asparagine 106. Zn(2+)-binding residues include cysteine 112, histidine 117, and cysteine 119. Cysteine 119, isoleucine 120, aspartate 121, serine 212, threonine 213, glycine 214, glutamate 215, and phenylalanine 216 together coordinate ADP-D-ribose.

This sequence belongs to the MacroD-type family. Zn-Macro subfamily. As to quaternary structure, monomer. Interacts with the lipoylated form of GcvH-L. It depends on Zn(2+) as a cofactor.

It catalyses the reaction 4-O-(ADP-D-ribosyl)-L-aspartyl-[protein] + H2O = L-aspartyl-[protein] + ADP-D-ribose + H(+). The catalysed reaction is 5-O-(ADP-D-ribosyl)-L-glutamyl-[protein] + H2O = L-glutamyl-[protein] + ADP-D-ribose + H(+). The enzyme catalyses S-(ADP-D-ribosyl)-L-cysteinyl-[protein] + H2O = ADP-D-ribose + L-cysteinyl-[protein]. Functionally, ADP-ribosylhydrolase that specifically reverses the SirTM-mediated mono-ADP-ribosylation at an asparatate residue of GcvH-L (SpyM50867), by releasing ADP-ribose from the target protein. May play a role in the regulation of the response to host-induced oxidative stress. It can also hydrolyze ADP-ribosyl-glutamate bonds and ADP-ribosyl-cysteine bonds. In vitro, it can remove the ADP-ribosyl modification from the human mono-ADP-ribosylated PARP1 E988Q mutant, which is primarily modified on glutamate site with only minor aspartate contribution. It can also hydrolyze the ADP-ribosyl-cysteinyl glycosidic bond of a Cys-ADP-ribosylated synthetic peptide. This Streptococcus pyogenes serotype M5 (strain Manfredo) protein is Protein-ADP-ribose hydrolase.